Reading from the N-terminus, the 528-residue chain is Probable serine/threonine-protein kinase 380R (528 aa).

The tract at residues 70-96 (VKIPKSKSPPKVKSPKRKKSPVRRRVS) is disordered. The segment covering 73–95 (PKSKSPPKVKSPKRKKSPVRRRV) has biased composition (basic residues). The region spanning 156–507 (FTNVKAVGKG…LANVLIHKIF (352 aa)) is the Protein kinase domain. ATP-binding positions include 162 to 170 (VGKGSFGTV) and K187. D302 functions as the Proton acceptor in the catalytic mechanism.

This sequence belongs to the protein kinase superfamily. Ser/Thr protein kinase family.

The catalysed reaction is L-seryl-[protein] + ATP = O-phospho-L-seryl-[protein] + ADP + H(+). The enzyme catalyses L-threonyl-[protein] + ATP = O-phospho-L-threonyl-[protein] + ADP + H(+). In Invertebrate iridescent virus 6 (IIV-6), this protein is Probable serine/threonine-protein kinase 380R.